The primary structure comprises 252 residues: Chitooligosaccharide deacetylase (252 aa).

Residues His-61 and His-125 each coordinate Mg(2+).

This sequence belongs to the YdjC deacetylase family. ChbG subfamily. As to quaternary structure, homodimer. The cofactor is Mg(2+).

The protein localises to the cytoplasm. The catalysed reaction is N,N'-diacetylchitobiose + H2O = N-acetyl-beta-D-glucosaminyl-(1-&gt;4)-D-glucosamine + acetate. It carries out the reaction diacetylchitobiose-6'-phosphate + H2O = N'-monoacetylchitobiose-6'-phosphate + acetate. Its pathway is glycan degradation; chitin degradation. Its function is as follows. Involved in the degradation of chitin. ChbG is essential for growth on the acetylated chitooligosaccharides chitobiose and chitotriose but is dispensable for growth on cellobiose and chitosan dimer, the deacetylated form of chitobiose. Deacetylation of chitobiose-6-P and chitotriose-6-P is necessary for both the activation of the chb promoter by the regulatory protein ChbR and the hydrolysis of phosphorylated beta-glucosides by the phospho-beta-glucosidase ChbF. Catalyzes the removal of only one acetyl group from chitobiose-6-P to yield monoacetylchitobiose-6-P, the inducer of ChbR and the substrate of ChbF. In Escherichia coli O6:H1 (strain CFT073 / ATCC 700928 / UPEC), this protein is Chitooligosaccharide deacetylase.